A 1050-amino-acid chain; its full sequence is MALYDEDLLKNPFYLALQKCRPDLCSKVAQIHGIVLVPCKGSLSSSIQSTCQFESYILIPVEEHFQTLNGKDVFIQGNRIKLGAGFACLLSVPILFEETFYNEKEESFSILCIAHPLEKRESSEEPLAPSDPFSLKTIEDVREFLGRHSERFDRNIASFHRTFRECERKSLRHHIDSANALYTKCLQQLLRDSHLKMLAKQEAQMNLMKQAVEIYVHHEIYNLIFKYVGTMEASEDAAFNKITRSLQDLQQKDIGVKPEFSFNIPRAKRELAQLNKCTSPQQKLVCLRKVVQLITQSPSQRVNLETMCADDLLSVLLYLLVKTEIPNWMANLSYIKNFRFSSLAKDELGYCLTSFEAAIEYIRQGSLSAKPPESEGFGDRLFLKQRMSLLSQMTSSPTDCLFKHIASGNQKEVERLLSQEDHDKDTVQKMCHPLCFCDDCEKLVSGRLNDPSVVTPFSRDDRGHTPLHVAAVCGQASLIDLLVSKGAMVNATDYHGATPLHLACQKGYQSVTLLLLHYKASAEVQDNNGNTPLHLACTYGHEDCVKALVYYDVESCRLDIGNEKGDTPLHIAARWGYQGVIETLLQNGASTEIQNRLKETPLKCALNSKILSVMEAYHLSFERRQKSSEAPVQSPQRSVDSISQESSTSSFSSMSASSRQEETKKDYREVEKLLRAVADGDLEMVRYLLEWTEEDLEDAEDTVSAADPEFCHPLCQCPKCAPAQKRLAKVPASGLGVNVTSQDGSSPLHVAALHGRADLIPLLLKHGANAGARNADQAVPLHLACQQGHFQVVKCLLDSNAKPNKKDLSGNTPLIYACSGGHHELVALLLQHGASINASNNKGNTALHEAVIEKHVFVVELLLLHGASVQVLNKRQRTAVDCAEQNSKIMELLQVVPSCVASLDDVAETDRKEYVTVKIRKKWNSKLYDLPDEPFTRQFYFVHSAGQFKGKTSREIMARDRSVPNLTEGSLHEPGRQSVTLRQNNLPAQSGSHAAEKGNSDWPERPGLTQTGPGHRRMLRRHTVEDAVVSQGPEAAGPLSTPQEVSASRS.

Residues 1 to 372 (MALYDEDLLK…RQGSLSAKPP (372 aa)) are sufficient for GEF activity towards RAB21. Positions 233-371 (ASEDAAFNKI…IRQGSLSAKP (139 aa)) constitute a VPS9 domain. ANK repeat units follow at residues 396-426 (SPTD…DKDT), 462-491 (RGHT…MVNA), 495-524 (HGAT…SAEV), 528-560 (NGNT…RLDI), 564-593 (KGDT…STEI), and 597-627 (LKET…RQKS). The tract at residues 396–460 (SPTDCLFKHI…PSVVTPFSRD (65 aa)) is sufficient for interaction with VPS29. Residues 451 to 600 (PSVVTPFSRD…TEIQNRLKET (150 aa)) are interaction with RAB38. Residues 451 to 730 (PSVVTPFSRD…APAQKRLAKV (280 aa)) form an interaction with RAB32 region. The interval 625 to 665 (QKSSEAPVQSPQRSVDSISQESSTSSFSSMSASSRQEETKK) is disordered. Over residues 628–637 (SEAPVQSPQR) the composition is skewed to polar residues. Residues 638–658 (SVDSISQESSTSSFSSMSASS) are compositionally biased toward low complexity. Residues 658 to 707 (SRQEETKKDYREVEKLLRAVADGDLEMVRYLLEWTEEDLEDAEDTVSAAD) are required for interaction with VAMP7. 5 ANK repeats span residues 668-698 (REVE…DLED), 743-772 (DGSS…NAGA), 776-805 (DQAV…KPNK), 809-838 (SGNT…SINA), and 842-871 (KGNT…SVQV). Positions 692 to 746 (TEEDLEDAEDTVSAADPEFCHPLCQCPKCAPAQKRLAKVPASGLGVNVTSQDGSS) are sufficient for interaction with VPS29. Residues Ser-962 and Ser-970 each carry the phosphoserine modification. The segment at 987-1050 (PAQSGSHAAE…TPQEVSASRS (64 aa)) is disordered. Positions 994-1004 (AAEKGNSDWPE) are enriched in basic and acidic residues. Thr-1023 is modified (phosphothreonine). Polar residues predominate over residues 1040-1050 (STPQEVSASRS).

As to quaternary structure, interacts with RAB21 (GDP-bound form), VPS29, RAB32 (GTP-bound form), RAB38 (GTP-bound form), VAMP7, KIF5A, KIF5C, GOLGA4. Interacts with low affinity with RAB5. ANKRD27:RAB32 heterodimers can homodimerize to form tetramers. Can interact with RAB38 or RAB32, VPS29 and VAMP7 simultaneously. A decreased interaction with RAB32 seen in the presence of SGSM2.

The protein resides in the early endosome. It is found in the late endosome. It localises to the cytoplasmic vesicle membrane. The protein localises to the lysosome. Its subcellular location is the cell membrane. The protein resides in the melanosome. In terms of biological role, may be a guanine exchange factor (GEF) for Rab21, Rab32 and Rab38 and regulate endosome dynamics. May regulate the participation of VAMP7 in membrane fusion events; in vitro inhibits VAMP7-mediated SNARE complex formation by trapping VAMP7 in a closed, fusogenically inactive conformation. Involved in peripheral melanosomal distribution of TYRP1 in melanocytes; the function, which probably is implicating vesicle-trafficking, includes cooperation with Rab32, Rab38 and VAMP7. Involved in the regulation of neurite growth; the function seems to require its GEF activity, probably towards Rab21, and VAMP7 but not Rab32/38. Proposed to be involved in Golgi sorting of VAMP7 and transport of VAMP7 vesicles to the cell surface; the function seems to implicate kinesin heavy chain isoform 5 proteins, GOLGA4, RAB21 and MACF1. Required for the colocalization of VAMP7 and Rab21, probably on TGN sites. Involved in GLUT1 endosome-to-plasma membrane trafficking; the function is dependent of association with VPS29. Regulates the proper trafficking of melanogenic enzymes TYR, TYRP1 and DCT/TYRP2 to melanosomes in melanocytes. This Homo sapiens (Human) protein is Ankyrin repeat domain-containing protein 27 (ANKRD27).